The primary structure comprises 261 residues: Hemin import ATP-binding protein HmuV (261 aa).

In terms of domain architecture, ABC transporter spans 5–241 (YTAENLTFTR…DALAHWYGAQ (237 aa)). 37 to 44 (GPNGAGKS) contacts ATP.

Belongs to the ABC transporter superfamily. Heme (hemin) importer (TC 3.A.1.14.5) family. As to quaternary structure, the complex is composed of two ATP-binding proteins (HmuV), two transmembrane proteins (HmuU) and a solute-binding protein (HmuT).

Its subcellular location is the cell inner membrane. Its function is as follows. Part of the ABC transporter complex HmuTUV involved in hemin import. Responsible for energy coupling to the transport system. The sequence is that of Hemin import ATP-binding protein HmuV from Enterobacter cloacae.